A 283-amino-acid chain; its full sequence is Pantothenate synthetase (283 aa).

Position 26-33 (26-33 (MGNLHEGH)) interacts with ATP. H33 functions as the Proton donor in the catalytic mechanism. Residue Q57 participates in (R)-pantoate binding. Q57 serves as a coordination point for beta-alanine. 144–147 (GKKD) provides a ligand contact to ATP. Position 150 (Q150) interacts with (R)-pantoate. 181–184 (LSSR) serves as a coordination point for ATP.

The protein belongs to the pantothenate synthetase family. As to quaternary structure, homodimer.

It localises to the cytoplasm. It catalyses the reaction (R)-pantoate + beta-alanine + ATP = (R)-pantothenate + AMP + diphosphate + H(+). It participates in cofactor biosynthesis; (R)-pantothenate biosynthesis; (R)-pantothenate from (R)-pantoate and beta-alanine: step 1/1. Its function is as follows. Catalyzes the condensation of pantoate with beta-alanine in an ATP-dependent reaction via a pantoyl-adenylate intermediate. The polypeptide is Pantothenate synthetase (Variovorax paradoxus (strain S110)).